The chain runs to 492 residues: MANYFNTLNLRQQLDQLGKCRFMGRDEFADEASYLKGKKVVIVGCGAQGLNQGLNMRDSGLDIAYALRAEAIAEKRASWRKATENGFTVGTYEDLIPQADLVVNLTPDKQHSAVVQAVQPLMKQGAALGYSHGFNIVEVGEQIRKDITVVMVAPKCPGTEVREEYKRGFGVPTLIAVHPENDPKGEGMAIAKAWAAATGGHRAGVLQSSFVAEVKSDLMGEQTILCGMLQAGSLLSFDKLVAEGTDPAYAEKLIQFGWETITEALKQGGITLMMDRLSNPAKLRAYALSEQLKGIMAPLFQKHMDDIISGEFSSGMMADWANDDVKLLTWREETGKTAFENAPQFDGKIAEQEYFDNGVLMVAMVKAGVELAFETMVSSGIIEESAYYESLHELPLIANTIARKRLYEMNVVISDTAEYGNYLFANAAVPLLKDAFMASLQPGDLGKAVAGTEVDNAQLRDVNEAIRNHPIETVGQTLRGYMKDMKRIAVAG.

In terms of domain architecture, KARI N-terminal Rossmann spans 14 to 208; the sequence is LDQLGKCRFM…GGHRAGVLQS (195 aa). NADP(+) contacts are provided by residues 45 to 48, Arg-68, Arg-76, Ser-78, and 108 to 110; these read CGAQ and DKQ. His-132 is a catalytic residue. Gly-158 is a binding site for NADP(+). KARI C-terminal knotted domains follow at residues 209–344 and 345–485; these read SFVA…NAPQ and FDGK…MKDM. The Mg(2+) site is built by Asp-217, Glu-221, Glu-389, and Glu-393. Ser-414 contacts substrate.

It belongs to the ketol-acid reductoisomerase family. Mg(2+) is required as a cofactor.

It carries out the reaction (2R)-2,3-dihydroxy-3-methylbutanoate + NADP(+) = (2S)-2-acetolactate + NADPH + H(+). It catalyses the reaction (2R,3R)-2,3-dihydroxy-3-methylpentanoate + NADP(+) = (S)-2-ethyl-2-hydroxy-3-oxobutanoate + NADPH + H(+). Its pathway is amino-acid biosynthesis; L-isoleucine biosynthesis; L-isoleucine from 2-oxobutanoate: step 2/4. The protein operates within amino-acid biosynthesis; L-valine biosynthesis; L-valine from pyruvate: step 2/4. Involved in the biosynthesis of branched-chain amino acids (BCAA). Catalyzes an alkyl-migration followed by a ketol-acid reduction of (S)-2-acetolactate (S2AL) to yield (R)-2,3-dihydroxy-isovalerate. In the isomerase reaction, S2AL is rearranged via a Mg-dependent methyl migration to produce 3-hydroxy-3-methyl-2-ketobutyrate (HMKB). In the reductase reaction, this 2-ketoacid undergoes a metal-dependent reduction by NADPH to yield (R)-2,3-dihydroxy-isovalerate. The protein is Ketol-acid reductoisomerase (NADP(+)) of Pectobacterium carotovorum subsp. carotovorum (strain PC1).